The following is a 373-amino-acid chain: tRNA 2-selenouridine synthase (373 aa).

The Rhodanese domain occupies 12 to 136; it reads FINDRPMMDA…MRGFLLETTE (125 aa). The active-site S-selanylcysteine intermediate is cysteine 95.

It belongs to the SelU family. Monomer.

It carries out the reaction 5-methylaminomethyl-2-thiouridine(34) in tRNA + selenophosphate + (2E)-geranyl diphosphate + H2O + H(+) = 5-methylaminomethyl-2-selenouridine(34) in tRNA + (2E)-thiogeraniol + phosphate + diphosphate. The catalysed reaction is 5-methylaminomethyl-2-thiouridine(34) in tRNA + (2E)-geranyl diphosphate = 5-methylaminomethyl-S-(2E)-geranyl-thiouridine(34) in tRNA + diphosphate. It catalyses the reaction 5-methylaminomethyl-S-(2E)-geranyl-thiouridine(34) in tRNA + selenophosphate + H(+) = 5-methylaminomethyl-2-(Se-phospho)selenouridine(34) in tRNA + (2E)-thiogeraniol. The enzyme catalyses 5-methylaminomethyl-2-(Se-phospho)selenouridine(34) in tRNA + H2O = 5-methylaminomethyl-2-selenouridine(34) in tRNA + phosphate. In terms of biological role, involved in the post-transcriptional modification of the uridine at the wobble position (U34) of tRNA(Lys), tRNA(Glu) and tRNA(Gln). Catalyzes the conversion of 2-thiouridine (S2U-RNA) to 2-selenouridine (Se2U-RNA). Acts in a two-step process involving geranylation of 2-thiouridine (S2U) to S-geranyl-2-thiouridine (geS2U) and subsequent selenation of the latter derivative to 2-selenouridine (Se2U) in the tRNA chain. This Ectopseudomonas mendocina (strain ymp) (Pseudomonas mendocina) protein is tRNA 2-selenouridine synthase.